A 5088-amino-acid chain; its full sequence is Replicase polyprotein 1ab (5088 aa).

A helical transmembrane segment spans residues 26–46; that stretch reads VTNVIQYWTPILTMLLLAIYI. Residues 301–323 are disordered; that stretch reads EIEDDTEAEETQKTKRKGKLQPQ. 5 helical membrane-spanning segments follow: residues 343–363, 1132–1152, 1156–1176, 1201–1221, and 1250–1270; these read HLTFGPAYMTMLCLISIMSPT, GLFLMLYIAALIIILAIAITI, TMMMFLKLITIFAYTFGHLLL, YGCLLMLGALAIAVIDLLAYI, and ILIPYIFTSYGLVLTIIVSYV. Active-site for 3C-like proteinase residues include histidine 1434 and cysteine 1539. A run of 2 helical transmembrane segments spans residues 1729–1749 and 1758–1778; these read FTHTHPAFYIAAACVFGLFFV and ILSSIIFAIPHIYVNYYYGLV. Residues 3093–3112 are disordered; it reads KPNCPMVPSEVPVRNKHKSA. Positions 4351–4616 constitute an ExoN domain; sequence MNIVMDDCIC…MTQCIYQSFV (266 aa). Active-site residues include aspartate 4362, glutamate 4364, and aspartate 4481. Cysteine 4498, cysteine 4504, cysteine 4522, and histidine 4525 together coordinate Zn(2+). Catalysis depends on residues histidine 4599, aspartate 4604, lysine 4880, aspartate 4969, lysine 4998, and glutamate 5035. The Nidovirus-type SAM-dependent 2'-O-MTase domain occupies 4844 to 5088; sequence LNNHAALAKA…RQSVFRYSPK (245 aa).

In terms of assembly, homodimer. In terms of processing, specific enzymatic cleavages in vivo by its own protease yield mature proteins. 3CL-PRO is autocatalytically processed.

It localises to the membrane. The catalysed reaction is a 5'-end (5'-triphosphoguanosine)-ribonucleoside in mRNA + S-adenosyl-L-methionine = a 5'-end (N(7)-methyl 5'-triphosphoguanosine)-ribonucleoside in mRNA + S-adenosyl-L-homocysteine. It catalyses the reaction RNA(n) + a ribonucleoside 5'-triphosphate = RNA(n+1) + diphosphate. It carries out the reaction ATP + H2O = ADP + phosphate + H(+). The enzyme catalyses a 5'-end (N(7)-methyl 5'-triphosphoguanosine)-ribonucleoside in mRNA + S-adenosyl-L-methionine = a 5'-end (N(7)-methyl 5'-triphosphoguanosine)-(2'-O-methyl-ribonucleoside) in mRNA + S-adenosyl-L-homocysteine + H(+). In terms of biological role, cysteine protease responsible for the majority of cleavages of the polyprotein. Recognizes substrates containing the core sequence [NT]-[EHKQSY]-|-[AGNST]. Its function is as follows. The helicase which contains a zinc finger structure displays RNA and DNA duplex-unwinding activities with 5' to 3' polarity. Functionally, RNA-directed RNA polymerase that catalyzes the transcription of viral genomic and subgenomic RNAs. Catalyzes the RNA N7-guanylyltransferase reaction to methylate the core cap structure GpppN-RNA into the type-0 cap (m)GpppN-RNA. The polypeptide is Replicase polyprotein 1ab (Ochlerotatus harrisoni (CAVV)).